A 621-amino-acid polypeptide reads, in one-letter code: SH2B adapter protein 2 (621 aa).

Phosphotyrosine is present on Tyr47. The residue at position 130 (Ser130) is a Phosphoserine. Residues 144–165 (RASPEPEGGATPKTTEPVSEPR) are disordered. The PH domain occupies 186-299 (DIQREGALRF…WVADIQGCVD (114 aa)). Residue Ser303 is modified to Phosphoserine. The region spanning 409-507 (WFHGTLSRVK…SADITLRSYV (99 aa)) is the SH2 domain. 2 disordered regions span residues 507–528 (VRAQ…PVPA) and 548–609 (PPTS…ATLG). Residues 552-570 (PSNGAGASSSSGSSSSATS) show a composition bias toward low complexity. Phosphoserine is present on Ser597. A Phosphotyrosine modification is found at Tyr618.

This sequence belongs to the SH2B adapter family. In terms of assembly, homodimer. Interacts with KIT/c-KIT, SHC1, EPOR, PDGFR, VAV1 and VAV3. Interacts (via N-terminal region) with SHC1. Interacts (via the phosphorylated C-terminus) with GRB2. Interacts (via its SH2 domain) with EPOR, INSR and KIT. Interacts with GRB2 after B-cell antigen receptor stimulation. Interacts (via PH domain) with VAV3. Interacts with NTRK1, NTRK2 and NTRK3 (phosphorylated); after stimulation of the receptor by its extracellular ligand and subsequent autophosphorylation of the receptor. Binds INSR, GRB2, ASB6 and CAP. Insulin stimulation leads to dissociation of CAP. Binds CBS only when SH2B2/APS has become phosphorylated. INSR binding does not depend on the phosphorylation of SH2B2/APS. Post-translationally, phosphorylated on a tyrosine residue by NTRK1, NTRK2, NTRK3 and INSR after stimulation of the receptor by its extracellular ligand. Tyrosine phosphorylated by JAK2, KIT and other kinases activated by B-cell receptor in response to stimulation with cytokines, IL3, IL5, PDGF, IGF1, IGF2, CSF2/GM-CSF and cross-linking of the B-cell receptor complex. In terms of tissue distribution, detected in embryonic brain, spinal cord and cortical neurons.

It is found in the cytoplasm. The protein resides in the membrane. In terms of biological role, adapter protein for several members of the tyrosine kinase receptor family. Involved in multiple signaling pathways. Binds to EPOR and suppresses EPO-induced STAT5 activation, possibly through a masking effect on STAT5 docking sites in EPOR. Suppresses PDGF-induced mitogenesis. Involved in stimulation of glucose uptake by insulin. Involved in coupling from immunoreceptor to Ras signaling. Acts as a negative regulator of cytokine signaling in collaboration with CBL. Induces cytoskeletal reorganization and neurite outgrowth in cultured neurons. The sequence is that of SH2B adapter protein 2 (Sh2b2) from Rattus norvegicus (Rat).